A 417-amino-acid polypeptide reads, in one-letter code: NADP-specific glutamate dehydrogenase A1 (417 aa).

Residue lysine 105 is part of the active site.

This sequence belongs to the Glu/Leu/Phe/Val dehydrogenases family. Homohexamer.

It catalyses the reaction L-glutamate + NADP(+) + H2O = 2-oxoglutarate + NH4(+) + NADPH + H(+). The sequence is that of NADP-specific glutamate dehydrogenase A1 (gdhA1) from Halobacterium salinarum (Halobacterium halobium).